The sequence spans 257 residues: Glutamate racemase (257 aa).

Substrate contacts are provided by residues 12 to 13 and 44 to 45; these read DS and YG. Cys75 serves as the catalytic Proton donor/acceptor. 76-77 contacts substrate; it reads NT. The active-site Proton donor/acceptor is Cys176. Residue 177-178 coordinates substrate; sequence TH.

This sequence belongs to the aspartate/glutamate racemases family.

The catalysed reaction is L-glutamate = D-glutamate. It functions in the pathway cell wall biogenesis; peptidoglycan biosynthesis. In terms of biological role, provides the (R)-glutamate required for cell wall biosynthesis. In Thermus thermophilus (strain ATCC BAA-163 / DSM 7039 / HB27), this protein is Glutamate racemase.